We begin with the raw amino-acid sequence, 427 residues long: Enolase (427 aa).

Glutamine 163 lines the (2R)-2-phosphoglycerate pocket. Glutamate 205 (proton donor) is an active-site residue. The Mg(2+) site is built by aspartate 242, glutamate 285, and aspartate 312. Residues lysine 337, arginine 366, serine 367, and lysine 388 each coordinate (2R)-2-phosphoglycerate. Residue lysine 337 is the Proton acceptor of the active site.

The protein belongs to the enolase family. Mg(2+) serves as cofactor.

The protein resides in the cytoplasm. Its subcellular location is the secreted. It localises to the cell surface. The enzyme catalyses (2R)-2-phosphoglycerate = phosphoenolpyruvate + H2O. Its pathway is carbohydrate degradation; glycolysis; pyruvate from D-glyceraldehyde 3-phosphate: step 4/5. Its function is as follows. Catalyzes the reversible conversion of 2-phosphoglycerate (2-PG) into phosphoenolpyruvate (PEP). It is essential for the degradation of carbohydrates via glycolysis. The protein is Enolase of Janthinobacterium sp. (strain Marseille) (Minibacterium massiliensis).